Reading from the N-terminus, the 107-residue chain is Immunoglobulin kappa constant (107 aa).

One can recognise an Ig-like domain in the interval 6–103 (PTVSIFPPSS…STSPIVKSFN (98 aa)). Cys27 and Cys87 are disulfide-bonded.

This Mus musculus (Mouse) protein is Immunoglobulin kappa constant.